The primary structure comprises 449 residues: CCA-adding enzyme (449 aa).

Serine 53 and lysine 56 together coordinate ATP. CTP-binding residues include serine 53 and lysine 56. Residues aspartate 65, aspartate 67, and aspartate 119 each coordinate Mg(2+). Residues histidine 142, lysine 161, and tyrosine 170 each coordinate ATP. Residues histidine 142, lysine 161, and tyrosine 170 each coordinate CTP.

It belongs to the tRNA nucleotidyltransferase/poly(A) polymerase family. Archaeal CCA-adding enzyme subfamily. In terms of assembly, homodimer. Mg(2+) serves as cofactor.

It carries out the reaction a tRNA precursor + 2 CTP + ATP = a tRNA with a 3' CCA end + 3 diphosphate. It catalyses the reaction a tRNA with a 3' CCA end + 2 CTP + ATP = a tRNA with a 3' CCACCA end + 3 diphosphate. Functionally, catalyzes the addition and repair of the essential 3'-terminal CCA sequence in tRNAs without using a nucleic acid template. Adds these three nucleotides in the order of C, C, and A to the tRNA nucleotide-73, using CTP and ATP as substrates and producing inorganic pyrophosphate. tRNA 3'-terminal CCA addition is required both for tRNA processing and repair. Also involved in tRNA surveillance by mediating tandem CCA addition to generate a CCACCA at the 3' terminus of unstable tRNAs. While stable tRNAs receive only 3'-terminal CCA, unstable tRNAs are marked with CCACCA and rapidly degraded. The protein is CCA-adding enzyme of Pyrococcus horikoshii (strain ATCC 700860 / DSM 12428 / JCM 9974 / NBRC 100139 / OT-3).